Reading from the N-terminus, the 528-residue chain is Sensory rhodopsin I transducer (528 aa).

The next 2 helical transmembrane spans lie at glycine 11–valine 31 and valine 35–alanine 55. HAMP domains follow at residues alanine 55–serine 107 and threonine 142–glutamate 195. In terms of domain architecture, Methyl-accepting transducer spans threonine 214–threonine 455. Glutamate 259 carries the post-translational modification Glutamate methyl ester (Glu).

The protein belongs to the methyl-accepting chemotaxis (MCP) protein family. As to quaternary structure, interacts with Sop1.

It localises to the cell membrane. Functionally, transduces signals from the phototaxis receptor sensory rhodopsin I (Sop1). The polypeptide is Sensory rhodopsin I transducer (htr1) (Haloarcula marismortui (strain ATCC 43049 / DSM 3752 / JCM 8966 / VKM B-1809) (Halobacterium marismortui)).